Consider the following 118-residue polypeptide: MLVNFVLVGFGAALGAMLRYGISVLVKSKWKTNFPFATFFINITGSFLLGFLVSSALGPVWQLFLGTGFMGGYTTFSTFKVESMELKWKTNYRVLFSYLGCTYVFGLIAAFLGLMLGV.

The next 4 membrane-spanning stretches (helical) occupy residues 5 to 25, 34 to 54, 56 to 76, and 98 to 118; these read FVLVGFGAALGAMLRYGISVL, FPFATFFINITGSFLLGFLVS, ALGPVWQLFLGTGFMGGYTTF, and YLGCTYVFGLIAAFLGLMLGV. Residues Gly71 and Thr74 each contribute to the Na(+) site.

Belongs to the fluoride channel Fluc/FEX (TC 1.A.43) family.

It localises to the cell membrane. The catalysed reaction is fluoride(in) = fluoride(out). Na(+) is not transported, but it plays an essential structural role and its presence is essential for fluoride channel function. Its function is as follows. Fluoride-specific ion channel. Important for reducing fluoride concentration in the cell, thus reducing its toxicity. The sequence is that of Fluoride-specific ion channel FluC 1 from Listeria monocytogenes serotype 4b (strain F2365).